The sequence spans 1297 residues: DNA-directed RNA polymerase subunit beta'' (1297 aa).

4 residues coordinate Zn(2+): Cys220, Cys293, Cys300, and Cys303. A compositionally biased stretch (basic residues) spans 1278–1288 (RRRKQNTKTRK). Positions 1278 to 1297 (RRRKQNTKTRKNNLFSLNEK) are disordered.

It belongs to the RNA polymerase beta' chain family. RpoC2 subfamily. As to quaternary structure, in plastids the minimal PEP RNA polymerase catalytic core is composed of four subunits: alpha, beta, beta', and beta''. When a (nuclear-encoded) sigma factor is associated with the core the holoenzyme is formed, which can initiate transcription. Zn(2+) is required as a cofactor.

It localises to the plastid. The protein localises to the chloroplast. The enzyme catalyses RNA(n) + a ribonucleoside 5'-triphosphate = RNA(n+1) + diphosphate. Functionally, DNA-dependent RNA polymerase catalyzes the transcription of DNA into RNA using the four ribonucleoside triphosphates as substrates. The sequence is that of DNA-directed RNA polymerase subunit beta'' from Welwitschia mirabilis (Tree tumbo).